A 615-amino-acid polypeptide reads, in one-letter code: Chaperone protein HscA homolog (615 aa).

This sequence belongs to the heat shock protein 70 family.

Its function is as follows. Chaperone involved in the maturation of iron-sulfur cluster-containing proteins. Has a low intrinsic ATPase activity which is markedly stimulated by HscB. The polypeptide is Chaperone protein HscA homolog (Aeromonas hydrophila subsp. hydrophila (strain ATCC 7966 / DSM 30187 / BCRC 13018 / CCUG 14551 / JCM 1027 / KCTC 2358 / NCIMB 9240 / NCTC 8049)).